The chain runs to 476 residues: Bifunctional protein HldE (476 aa).

A ribokinase region spans residues 1-318 (MAQYSAEFKQ…ENAIHARPET (318 aa)). 195-198 (NMSE) contacts ATP. Residue Asp-264 is part of the active site. The tract at residues 344 to 476 (MTNGCFDILH…VIEKIKLLKD (133 aa)) is cytidylyltransferase.

In the N-terminal section; belongs to the carbohydrate kinase PfkB family. This sequence in the C-terminal section; belongs to the cytidylyltransferase family. As to quaternary structure, homodimer.

It carries out the reaction D-glycero-beta-D-manno-heptose 7-phosphate + ATP = D-glycero-beta-D-manno-heptose 1,7-bisphosphate + ADP + H(+). It catalyses the reaction D-glycero-beta-D-manno-heptose 1-phosphate + ATP + H(+) = ADP-D-glycero-beta-D-manno-heptose + diphosphate. It participates in nucleotide-sugar biosynthesis; ADP-L-glycero-beta-D-manno-heptose biosynthesis; ADP-L-glycero-beta-D-manno-heptose from D-glycero-beta-D-manno-heptose 7-phosphate: step 1/4. Its pathway is nucleotide-sugar biosynthesis; ADP-L-glycero-beta-D-manno-heptose biosynthesis; ADP-L-glycero-beta-D-manno-heptose from D-glycero-beta-D-manno-heptose 7-phosphate: step 3/4. Catalyzes the phosphorylation of D-glycero-D-manno-heptose 7-phosphate at the C-1 position to selectively form D-glycero-beta-D-manno-heptose-1,7-bisphosphate. Functionally, catalyzes the ADP transfer from ATP to D-glycero-beta-D-manno-heptose 1-phosphate, yielding ADP-D-glycero-beta-D-manno-heptose. The chain is Bifunctional protein HldE from Haemophilus influenzae (strain PittGG).